The following is a 395-amino-acid chain: ASTKGPSVFPLAPCSRSTSESTAALGCLVKDYFPEPVTVSWNSGALTSGVHTFPAVLQSSGLYSLSSVVTVPSSNFGTQTYTCNVDHKPSNTKVDKTVERKCCVECPPCPAPPVAGPSVFLFPPKPKDTLMISRTPEVTCVVVDVSHEDPEVQFNWYVDGVEVHNAKTKPREEQFNSTFRVVSVLTVVHQDWLNGKEYKCKVSNKGLPAPIEKTISKTKGQPREPQVYTLPPSREEMTKNQVSLTCLVKGFYPSDISVEWESNGQPENNYKTTPPMLDSDGSFFLYSKLTVDKSRWQQGNVFSCSVMHEALHNHYTQKSLSLSPELQLEESCAEAQDGELDGLWTTITIFITLFLLSVCYSATITFFKVKWIFSSVVDLKQTIVPDYRNMIRQGA.

Residues 1 to 98 (ASTKGPSVFP…PSNTKVDKTV (98 aa)) are CH1. At 1–346 (ASTKGPSVFP…DGELDGLWTT (346 aa)) the chain is on the extracellular side. 3 consecutive Ig-like domains span residues 6 to 99 (PSVF…KTVE), 117 to 216 (PSVF…KTIS), and 225 to 321 (PQVY…KSLS). C27 and C83 are joined by a disulfide. The interval 99–110 (ERKCCVECPPCP) is hinge. Residues 111–219 (APPVAGPSVF…PIEKTISKTK (109 aa)) form a CH2 region. Cystine bridges form between C140–C200 and C246–C304. N-linked (GlcNAc...) (complex) asparagine glycosylation is present at N176. The interval 220 to 326 (GQPREPQVYT…QKSLSLSPEL (107 aa)) is CH3. The chain crosses the membrane as a helical span at residues 347–367 (ITIFITLFLLSVCYSATITFF). At 368–395 (KVKWIFSSVVDLKQTIVPDYRNMIRQGA) the chain is on the cytoplasmic side.

In terms of assembly, immunoglobulins are composed of two identical heavy chains and two identical light chains; disulfide-linked. Glycosylation on Asn-176 is required for interaction with Fc receptors and ability to activate the complement pathway. Post-translationally, (Microbial infection) Deglycosylation on Asn-176 by S.pyogenes EndoS or Endos2 endoglucosidases prevents interaction between immunoglobulin-gamma (IgG) and Fc receptors, impairing ability to activate the complement pathway.

It localises to the secreted. The protein localises to the cell membrane. In terms of biological role, constant region of immunoglobulin heavy chains. Immunoglobulins, also known as antibodies, are membrane-bound or secreted glycoproteins produced by B lymphocytes. In the recognition phase of humoral immunity, the membrane-bound immunoglobulins serve as receptors which, upon binding of a specific antigen, trigger the clonal expansion and differentiation of B lymphocytes into immunoglobulins-secreting plasma cells. Secreted immunoglobulins mediate the effector phase of humoral immunity, which results in the elimination of bound antigens. The antigen binding site is formed by the variable domain of one heavy chain, together with that of its associated light chain. Thus, each immunoglobulin has two antigen binding sites with remarkable affinity for a particular antigen. The variable domains are assembled by a process called V-(D)-J rearrangement and can then be subjected to somatic hypermutations which, after exposure to antigen and selection, allow affinity maturation for a particular antigen. The chain is Immunoglobulin heavy constant gamma 2 from Homo sapiens (Human).